The sequence spans 166 residues: Cofilin-1 (166 aa).

Ala-2 is subject to N-acetylalanine. Phosphoserine occurs at positions 3 and 8. One can recognise an ADF-H domain in the interval 4-153 (GVAVSDGVIK…KDRCTLAEKL (150 aa)). An N6-acetyllysine modification is found at Lys-13. Residue Thr-25 is modified to Phosphothreonine. The short motif at 30–34 (KKRKK) is the Nuclear localization signal element. A Phosphoserine modification is found at Ser-41. At Tyr-68 the chain carries Phosphotyrosine. At Lys-73 the chain carries N6-acetyllysine. A Glycyl lysine isopeptide (Lys-Gly) (interchain with G-Cter in SUMO2) cross-link involves residue Lys-132. Phosphotyrosine is present on Tyr-140. Residue Lys-144 is modified to N6-acetyllysine. Ser-156 is modified (phosphoserine).

This sequence belongs to the actin-binding proteins ADF family. Can bind G- and F-actin in a 1:1 ratio of cofilin to actin. It is a major component of intranuclear and cytoplasmic actin rods. Interacts with the subcortical maternal complex (SCMC) via interaction with TLE6 and NLRP5. Interacts with C9orf72. Inactivated by phosphorylation on Ser-3. Phosphorylated on Ser-3 in resting cells. Dephosphorylated by PDXP/chronophin; this restores its activity in promoting actin filament depolymerization. The phosphorylation of Ser-24 may prevent recognition of the nuclear localization signal. Phosphorylated via a ARRB1-RAC1-LIMK1-PAK1 cascade upon active ligand stimulation of atypical chemokine receptor ACKR2.

It localises to the nucleus matrix. The protein resides in the cytoplasm. The protein localises to the cytoskeleton. Its subcellular location is the cell projection. It is found in the ruffle membrane. It localises to the lamellipodium membrane. The protein resides in the lamellipodium. The protein localises to the growth cone. Its subcellular location is the axon. In terms of biological role, binds to F-actin and exhibits pH-sensitive F-actin depolymerizing activity. Important for normal progress through mitosis and normal cytokinesis. In conjunction with the subcortical maternal complex (SCMC), plays an essential role for zygotes to progress beyond the first embryonic cell divisions via regulation of actin dynamics. Required for the centralization of the mitotic spindle and symmetric division of zygotes. Plays a role in the regulation of cell morphology and cytoskeletal organization in epithelial cells. Required for the up-regulation of atypical chemokine receptor ACKR2 from endosomal compartment to cell membrane, increasing its efficiency in chemokine uptake and degradation. Required for neural tube morphogenesis and neural crest cell migration. This Rattus norvegicus (Rat) protein is Cofilin-1 (Cfl1).